Consider the following 354-residue polypeptide: N-acetyl-gamma-glutamyl-phosphate reductase (354 aa).

The active site involves C156.

The protein belongs to the NAGSA dehydrogenase family. Type 1 subfamily.

It is found in the cytoplasm. The enzyme catalyses N-acetyl-L-glutamate 5-semialdehyde + phosphate + NADP(+) = N-acetyl-L-glutamyl 5-phosphate + NADPH + H(+). The protein operates within amino-acid biosynthesis; L-arginine biosynthesis; N(2)-acetyl-L-ornithine from L-glutamate: step 3/4. Functionally, catalyzes the NADPH-dependent reduction of N-acetyl-5-glutamyl phosphate to yield N-acetyl-L-glutamate 5-semialdehyde. The sequence is that of N-acetyl-gamma-glutamyl-phosphate reductase from Bordetella pertussis (strain Tohama I / ATCC BAA-589 / NCTC 13251).